The primary structure comprises 420 residues: UDP-N-acetylglucosamine 1-carboxyvinyltransferase (420 aa).

22–23 (KN) provides a ligand contact to phosphoenolpyruvate. Residue Arg92 participates in UDP-N-acetyl-alpha-D-glucosamine binding. Cys116 (proton donor) is an active-site residue. Cys116 is subject to 2-(S-cysteinyl)pyruvic acid O-phosphothioketal. 2 residues coordinate UDP-N-acetyl-alpha-D-glucosamine: Asp306 and Ile328.

This sequence belongs to the EPSP synthase family. MurA subfamily.

The protein resides in the cytoplasm. It carries out the reaction phosphoenolpyruvate + UDP-N-acetyl-alpha-D-glucosamine = UDP-N-acetyl-3-O-(1-carboxyvinyl)-alpha-D-glucosamine + phosphate. It participates in cell wall biogenesis; peptidoglycan biosynthesis. Its function is as follows. Cell wall formation. Adds enolpyruvyl to UDP-N-acetylglucosamine. The protein is UDP-N-acetylglucosamine 1-carboxyvinyltransferase of Blochmanniella floridana.